A 457-amino-acid chain; its full sequence is Siroheme synthase (457 aa).

The tract at residues Met-1–Thr-204 is precorrin-2 dehydrogenase /sirohydrochlorin ferrochelatase. Residues Asp-22–Val-23 and Leu-43–Ala-44 each bind NAD(+). Ser-128 is subject to Phosphoserine. The tract at residues Gly-216–His-457 is uroporphyrinogen-III C-methyltransferase. An S-adenosyl-L-methionine-binding site is contributed by Pro-225. The active-site Proton acceptor is the Asp-248. Lys-270 (proton donor) is an active-site residue. S-adenosyl-L-methionine is bound by residues Gly-301–Asp-303, Ile-306, Thr-331–Ala-332, Met-382, and Gly-411.

The protein in the N-terminal section; belongs to the precorrin-2 dehydrogenase / sirohydrochlorin ferrochelatase family. In the C-terminal section; belongs to the precorrin methyltransferase family.

The enzyme catalyses uroporphyrinogen III + 2 S-adenosyl-L-methionine = precorrin-2 + 2 S-adenosyl-L-homocysteine + H(+). The catalysed reaction is precorrin-2 + NAD(+) = sirohydrochlorin + NADH + 2 H(+). It catalyses the reaction siroheme + 2 H(+) = sirohydrochlorin + Fe(2+). The protein operates within cofactor biosynthesis; adenosylcobalamin biosynthesis; precorrin-2 from uroporphyrinogen III: step 1/1. It participates in cofactor biosynthesis; adenosylcobalamin biosynthesis; sirohydrochlorin from precorrin-2: step 1/1. It functions in the pathway porphyrin-containing compound metabolism; siroheme biosynthesis; precorrin-2 from uroporphyrinogen III: step 1/1. Its pathway is porphyrin-containing compound metabolism; siroheme biosynthesis; siroheme from sirohydrochlorin: step 1/1. The protein operates within porphyrin-containing compound metabolism; siroheme biosynthesis; sirohydrochlorin from precorrin-2: step 1/1. Functionally, multifunctional enzyme that catalyzes the SAM-dependent methylations of uroporphyrinogen III at position C-2 and C-7 to form precorrin-2 via precorrin-1. Then it catalyzes the NAD-dependent ring dehydrogenation of precorrin-2 to yield sirohydrochlorin. Finally, it catalyzes the ferrochelation of sirohydrochlorin to yield siroheme. In Enterobacter sp. (strain 638), this protein is Siroheme synthase.